We begin with the raw amino-acid sequence, 286 residues long: Pyridoxal kinase PdxY (286 aa).

Residues serine 9 and 44–45 contribute to the substrate site; that span reads TQ. ATP is bound by residues aspartate 111, alanine 143, glutamate 148, lysine 181, and 208 to 211; that span reads RPLV. Aspartate 223 is a binding site for substrate.

It belongs to the pyridoxine kinase family. PdxY subfamily. Homodimer. Mg(2+) is required as a cofactor.

It catalyses the reaction pyridoxal + ATP = pyridoxal 5'-phosphate + ADP + H(+). It functions in the pathway cofactor metabolism; pyridoxal 5'-phosphate salvage; pyridoxal 5'-phosphate from pyridoxal: step 1/1. In terms of biological role, pyridoxal kinase involved in the salvage pathway of pyridoxal 5'-phosphate (PLP). Catalyzes the phosphorylation of pyridoxal to PLP. The chain is Pyridoxal kinase PdxY from Yersinia pestis bv. Antiqua (strain Antiqua).